We begin with the raw amino-acid sequence, 153 residues long: MNVGVAHSEVNPNTRVMNSRGMWLTYALGVGLLHIVLLSIPFFSVPVAWTLTNVIHNLGMYVFLHAVKGTPFETPDQGKARLLTHWEQLDYGVQFTSSRKFFTISPIILYFLASFYTKYDTTHFILNTASLLSVLIPKMPQLHGVRIFGINKY.

Topologically, residues 1-26 (MNVGVAHSEVNPNTRVMNSRGMWLTY) are cytoplasmic. A run of 2 helical transmembrane segments spans residues 27-46 (ALGV…FSVP) and 47-64 (VAWT…YVFL). Topologically, residues 65–100 (HAVKGTPFETPDQGKARLLTHWEQLDYGVQFTSSRK) are cytoplasmic. A helical membrane pass occupies residues 101 to 121 (FFTISPIILYFLASFYTKYDT). The Extracellular segment spans residues 122–123 (TH). The helical transmembrane segment at 124 to 140 (FILNTASLLSVLIPKMP) threads the bilayer. At 141 to 153 (QLHGVRIFGINKY) the chain is on the cytoplasmic side.

The protein belongs to the ORM family. As to quaternary structure, ceramide-sensitive subunit of the serine palmitoyltransferase (SPT) complex, which is also composed of SPTLC1, SPTLC2/3 and SPTSSA/B.

Its subcellular location is the endoplasmic reticulum membrane. Plays an essential role in the homeostatic regulation of sphingolipid de novo biosynthesis by modulating the activity of the serine palmitoyltransferase (SPT) in response to ceramide levels. When complexed to SPT, the binding of ceramides to its N-terminus stabilizes a conformation that block SPT substrate entry, hence preventing SPT catalytic activity. Through this mechanism, maintains ceramide levels at sufficient concentrations for the production of complex sphingolipids, but which prevents the accumulation of ceramides to levels that trigger apoptosis. This chain is ORM1-like protein 1 (ORMDL1), found in Bos taurus (Bovine).